The following is a 513-amino-acid chain: ATP synthase subunit alpha (513 aa).

169–176 (GDRQTGKT) contributes to the ATP binding site.

This sequence belongs to the ATPase alpha/beta chains family. In terms of assembly, F-type ATPases have 2 components, CF(1) - the catalytic core - and CF(0) - the membrane proton channel. CF(1) has five subunits: alpha(3), beta(3), gamma(1), delta(1), epsilon(1). CF(0) has three main subunits: a(1), b(2) and c(9-12). The alpha and beta chains form an alternating ring which encloses part of the gamma chain. CF(1) is attached to CF(0) by a central stalk formed by the gamma and epsilon chains, while a peripheral stalk is formed by the delta and b chains.

The protein localises to the cell inner membrane. It catalyses the reaction ATP + H2O + 4 H(+)(in) = ADP + phosphate + 5 H(+)(out). Functionally, produces ATP from ADP in the presence of a proton gradient across the membrane. The alpha chain is a regulatory subunit. This is ATP synthase subunit alpha from Halorhodospira halophila (strain DSM 244 / SL1) (Ectothiorhodospira halophila (strain DSM 244 / SL1)).